Consider the following 314-residue polypeptide: MKQYLDLEKYVLENGTQKGDRTGTGTISTFGYQMRFDLQEGFPIMTTKRVPFKLVVSELLWFLHGDTNIRYLLQHNNNIWNEWAFERFVKSDDYKGEDMTDFGLRAERDPAFKEVYQAEMEKFKTRILEDEAFANKYGELGNIYGKQWREWKTSQGETIDQLADLIEMIKTNPNSRRLIVSAWNPEDIPNMALPPCHSLFQFYVADGKLSCQLYQRSADIFLGVPFNIASYALLTHLIAREVGLEVGEFIHTMGDAHLYNNHIEQVKEQLSRTPHKLPKLVLSDKPATIFDFDVADISLDGYNPDPAIKAPISV.

Residues R21 and 176-177 (RR) each bind dUMP. The Nucleophile role is filled by C196. DUMP contacts are provided by residues 216–219 (RSAD), N227, and 257–259 (HLY). Position 219 (D219) interacts with (6R)-5,10-methylene-5,6,7,8-tetrahydrofolate. S313 lines the (6R)-5,10-methylene-5,6,7,8-tetrahydrofolate pocket.

Belongs to the thymidylate synthase family. Bacterial-type ThyA subfamily. In terms of assembly, homodimer.

Its subcellular location is the cytoplasm. It carries out the reaction dUMP + (6R)-5,10-methylene-5,6,7,8-tetrahydrofolate = 7,8-dihydrofolate + dTMP. Its pathway is pyrimidine metabolism; dTTP biosynthesis. In terms of biological role, catalyzes the reductive methylation of 2'-deoxyuridine-5'-monophosphate (dUMP) to 2'-deoxythymidine-5'-monophosphate (dTMP) while utilizing 5,10-methylenetetrahydrofolate (mTHF) as the methyl donor and reductant in the reaction, yielding dihydrofolate (DHF) as a by-product. This enzymatic reaction provides an intracellular de novo source of dTMP, an essential precursor for DNA biosynthesis. This Listeria monocytogenes serotype 4a (strain HCC23) protein is Thymidylate synthase.